Here is a 389-residue protein sequence, read N- to C-terminus: MTTFFISKVNGPVNKSLIWLKIHIYEFFLLKFMLLFPPTVCSTNPDCFKSNRIVNCFLDESPYFFRWVGFSLQKTQVAKIILCLIAVICCELSLTSNQINTSQAYPIFAQQNYENPREATGRIVCANCHLAQKPVELSLPQAVMPDTVFEAVVKIPYDQEIQQVLGNGKKGGLNVGAVLILPEGFSLAPPDRIPEEMKNKVGKLYFQSYNPEKPNILVIGPVPGKTYNEMVFPILSPNPETNKNISYLKYPIYLGGNRGRGQIYPDGSKSNNTVYNASTGGTIVDITPASKKGGYNLTIETANGEQIVDKIPPGPELIVSVGQSIKPDQALTNNPNVGGFGQQDGEIVLQNPVRLQALIVFFIFVILTQLFLVLKKKQFEKVQLAEMNF.

Positions 1-42 are cleaved as a signal peptide; it reads MTTFFISKVNGPVNKSLIWLKIHIYEFFLLKFMLLFPPTVCS. Residues Tyr-105, Cys-125, Cys-128, and His-129 each contribute to the heme site. A helical membrane pass occupies residues 355 to 375; that stretch reads LQALIVFFIFVILTQLFLVLK.

It belongs to the cytochrome f family. The 4 large subunits of the cytochrome b6-f complex are cytochrome b6, subunit IV (17 kDa polypeptide, petD), cytochrome f and the Rieske protein, while the 4 small subunits are PetG, PetL, PetM and PetN. The complex functions as a dimer. Heme is required as a cofactor.

The protein resides in the plastid. It localises to the chloroplast thylakoid membrane. Component of the cytochrome b6-f complex, which mediates electron transfer between photosystem II (PSII) and photosystem I (PSI), cyclic electron flow around PSI, and state transitions. In Pleurastrum terricola (Filamentous green alga), this protein is Cytochrome f.